Consider the following 431-residue polypeptide: Pheromone alpha factor receptor (431 aa).

The Extracellular portion of the chain corresponds to 1 to 49 (MSDAAPSLSNLFYDPTYNPGQSTINYTSIYGNGSTITFDELQGLVNSTV). N-linked (GlcNAc...) asparagine glycans are attached at residues asparagine 25 and asparagine 32. The helical transmembrane segment at 50 to 72 (TQAIMFGVRCGAAALTLIVMWMT) threads the bilayer. The short motif at 53 to 61 (IMFGVRCGA) is the Glycine zipper motif element. Residues 73 to 78 (SRSRKT) are Cytoplasmic-facing. The chain crosses the membrane as a helical span at residues 79-102 (PIFIINQVSLFLIILHSALYFKYL). The Extracellular portion of the chain corresponds to 103–132 (LSNYSSVTYALTGFPQFISRGDVHVYGATN). A helical transmembrane segment spans residues 133–156 (IIQVLLVASIETSLVFQIKVIFTG). Topologically, residues 157–163 (DNFKRIG) are cytoplasmic. The chain crosses the membrane as a helical span at residues 164–188 (LMLTSISFTLGIATVTMYFVSAVKG). Residues 189–205 (MIVTYNDVSATQDKYFN) are Extracellular-facing. The chain crosses the membrane as a helical span at residues 206–230 (ASTILLASSINFMSFVLVVKLILAI). Topologically, residues 231 to 241 (RSRRFLGLKQF) are cytoplasmic. The helical transmembrane segment at 242–266 (DSFHILLIMSCQSLLVPSIIFILAY) threads the bilayer. Over 267 to 275 (SLKPNQGTD) the chain is Extracellular. The helical transmembrane segment at 276–299 (VLTTVATLLAVLSLPLSSMWATAA) threads the bilayer. The Cytoplasmic portion of the chain corresponds to 300 to 431 (NNASKTNTIT…KFWTEDNNNL (132 aa)). Phosphoserine is present on residues serine 310 and serine 315. At threonine 329 the chain carries Phosphothreonine. The residue at position 331 (serine 331) is a Phosphoserine. A Glycyl lysine isopeptide (Lys-Gly) (interchain with G-Cter in ubiquitin) cross-link involves residue lysine 337. Serine 360 bears the Phosphoserine mark. Threonine 363 carries the post-translational modification Phosphothreonine. Serine 366 is subject to Phosphoserine. Lysine 374 is covalently cross-linked (Glycyl lysine isopeptide (Lys-Gly) (interchain with G-Cter in ubiquitin)). The segment covering 379 to 389 (QLPTPTSSKNT) has biased composition (polar residues). The segment at 379–406 (QLPTPTSSKNTRIGPFADASYKEGEVEP) is disordered. Threonine 382 carries the phosphothreonine modification. Phosphoserine is present on residues serine 385 and serine 386. Residue lysine 400 forms a Glycyl lysine isopeptide (Lys-Gly) (interchain with G-Cter in ubiquitin) linkage. Threonine 411 and threonine 414 each carry phosphothreonine. Lysine 422 is covalently cross-linked (Glycyl lysine isopeptide (Lys-Gly) (interchain with G-Cter in ubiquitin)).

Belongs to the G-protein coupled receptor 4 family. In terms of assembly, homodimer. Might also for higher order homooligomers such as homotetramers. Oligomerization is mediated significantly by transmembrane domain 1 (TMD1), possibly in concert with the N-terminal extracellular domain and TMD2. Interaction with GPA1, its dedicated G-alpha protein. Undergoes hyperphosphorylation of the C-terminal cytoplasmic domain after binding of the alpha-factor, which leads to internalization by endocytosis. Post-translationally, monoubiquitination at Lys-337 triggers internalization of STE2. In terms of processing, N-glycosylated. N-glycosylation may be involved in the sorting process for misfolded STE2 protein. As to expression, expressed in MATa strains but not in MATalpha strains.

It is found in the cell membrane. In terms of biological role, fungal class D1 G-protein-coupled receptor that acts as an alpha-factor pheromone receptor performing pheromone-dependent signal transduction involved in cellular conjugation, mating projection assembly, and in cell fusion. Following alpha-factor-binding, the signal is transmitted via a tripartite G protein consisting of alpha-, beta- and gamma-subunits (GAP1, STE4 and STE8 respectively) that prepares the cell for conjugation. In the inactive state, the cytoplasmic end of transmembrane domain 7 (TMD7) is unstructured and packs between TMD1-6, blocking the G protein coupling site. Agonist binding results in the outward movement of the extracellular ends of TMD6 and TMD7 by 6 Angstroms. On the intracellular surface, the G protein coupling site is formed by a 20 Angstroms outward movement of the unstructured region in TMD7 that unblocks the site, and a 12 Angstroms inward movement of TMD6. The chain is Pheromone alpha factor receptor (STE2) from Saccharomyces cerevisiae (strain ATCC 204508 / S288c) (Baker's yeast).